Consider the following 90-residue polypeptide: Barrier-to-autointegration factor-like protein (90 aa).

It belongs to the BAF family. As to quaternary structure, homodimer. Heterodimerizes with BANF1.

The protein resides in the nucleus. The protein localises to the cytoplasm. In terms of biological role, may play a role in BANF1 regulation and influence tissue-specific roles of BANF1. This Bos taurus (Bovine) protein is Barrier-to-autointegration factor-like protein (BANF2).